Reading from the N-terminus, the 607-residue chain is Elongation factor 4 (607 aa).

The region spanning 11–193 is the tr-type G domain; that stretch reads EKIRNFSIIA…QIVEKVPAPT (183 aa). Residues 23–28 and 140–143 each bind GTP; these read DHGKST and NKID.

This sequence belongs to the TRAFAC class translation factor GTPase superfamily. Classic translation factor GTPase family. LepA subfamily.

The protein localises to the cell membrane. The catalysed reaction is GTP + H2O = GDP + phosphate + H(+). In terms of biological role, required for accurate and efficient protein synthesis under certain stress conditions. May act as a fidelity factor of the translation reaction, by catalyzing a one-codon backward translocation of tRNAs on improperly translocated ribosomes. Back-translocation proceeds from a post-translocation (POST) complex to a pre-translocation (PRE) complex, thus giving elongation factor G a second chance to translocate the tRNAs correctly. Binds to ribosomes in a GTP-dependent manner. The polypeptide is Elongation factor 4 (Streptococcus pneumoniae (strain Hungary19A-6)).